A 427-amino-acid polypeptide reads, in one-letter code: L-rhamnose isomerase (427 aa).

Residues His-264, Asp-296, and Asp-298 each contribute to the Mn(2+) site.

Belongs to the rhamnose isomerase family. It depends on Mn(2+) as a cofactor.

The protein localises to the cytoplasm. The enzyme catalyses L-rhamnopyranose = L-rhamnulose. Its pathway is carbohydrate degradation; L-rhamnose degradation; glycerone phosphate from L-rhamnose: step 1/3. Catalyzes the interconversion of L-rhamnose and L-rhamnulose. The chain is L-rhamnose isomerase from Rhodopirellula baltica (strain DSM 10527 / NCIMB 13988 / SH1).